The following is a 119-amino-acid chain: Amicyanin-alpha (119 aa).

Residues 1 to 20 (MRALAFAAALAAFSATAALA) form the signal peptide. The Plastocyanin-like domain occupies 21–119 (AGALEAVQEA…PFMKGKVVVE (99 aa)). Cu cation is bound by residues H67, C106, H109, and M112.

It depends on Cu cation as a cofactor.

Its subcellular location is the periplasm. Its pathway is one-carbon metabolism; methylamine degradation. Functionally, primary acceptor of electrons from methylamine dehydrogenase. Passes those electrons on either a soluble cytochrome c or to pseudoazurin. This chain is Amicyanin-alpha (mauC), found in Methylorubrum extorquens (strain ATCC 14718 / DSM 1338 / JCM 2805 / NCIMB 9133 / AM1) (Methylobacterium extorquens).